Consider the following 342-residue polypeptide: Nicotinate-nucleotide--dimethylbenzimidazole phosphoribosyltransferase (342 aa).

The active-site Proton acceptor is Glu311.

Belongs to the CobT family.

The enzyme catalyses 5,6-dimethylbenzimidazole + nicotinate beta-D-ribonucleotide = alpha-ribazole 5'-phosphate + nicotinate + H(+). The protein operates within nucleoside biosynthesis; alpha-ribazole biosynthesis; alpha-ribazole from 5,6-dimethylbenzimidazole: step 1/2. Functionally, catalyzes the synthesis of alpha-ribazole-5'-phosphate from nicotinate mononucleotide (NAMN) and 5,6-dimethylbenzimidazole (DMB). The chain is Nicotinate-nucleotide--dimethylbenzimidazole phosphoribosyltransferase from Shewanella piezotolerans (strain WP3 / JCM 13877).